Here is a 193-residue protein sequence, read N- to C-terminus: Bcl-2-binding component 3 (193 aa).

2 disordered regions span residues 1-31 and 71-131; these read MARA…GRLM and ALGG…VEEE. Ser10 carries the phosphoserine modification. Residues 137-151 carry the BH3 motif; the sequence is IGAQLRRMADDLNAQ.

This sequence belongs to the Bcl-2 family. In terms of assembly, interacts with MCL1 and BCL2A1. Interacts with BCL2 and BCL2L1/BCL-XL. Interacts (via BH3 domain) with NOL3 (via CARD domain); this interaction prevents BBC3 association with BCL2 and results in CASP8 activation.

The protein resides in the mitochondrion. Essential mediator of p53/TP53-dependent and p53/TP53-independent apoptosis. Promotes partial unfolding of BCL2L1 and dissociation of BCL2L1 from p53/TP53, releasing the bound p53/TP53 to induce apoptosis. Regulates ER stress-induced neuronal apoptosis. This Mus musculus (Mouse) protein is Bcl-2-binding component 3 (Bbc3).